The sequence spans 842 residues: Cation/H(+) antiporter 20 (842 aa).

12 consecutive transmembrane segments (helical) span residues 26 to 46, 55 to 75, 86 to 106, 122 to 142, 155 to 175, 193 to 213, 228 to 248, 283 to 303, 320 to 340, 353 to 373, 380 to 400, and 413 to 433; these read FPLL…LAVL, VIAE…RNMA, MPIL…LVGL, GIAV…AFVI, YAEF…PVLA, MAAA…AVAL, LVSL…LVVI, FATD…GLTI, FVSG…TDVA, LVVV…AVMV, ALTL…VLNI, and AILV…VMAI. Residues 585–595 are compositionally biased toward basic and acidic residues; the sequence is DHGHSHHHQDG. The tract at residues 585–605 is disordered; sequence DHGHSHHHQDGGGDGNVPENV.

Belongs to the monovalent cation:proton antiporter 2 (CPA2) transporter (TC 2.A.37) family. CHX (TC 2.A.37.4) subfamily. As to expression, expressed in leaves and stems. Preferentially expressed in guards cells.

The protein localises to the endomembrane system. In terms of biological role, operates as a K(+)/H(+) antiporter that maintains K(+) homeostasis in guard cells and could regulate pH. Plays a critical role in osmoregulation through the control of stomates opening. The chain is Cation/H(+) antiporter 20 (CHX20) from Arabidopsis thaliana (Mouse-ear cress).